We begin with the raw amino-acid sequence, 373 residues long: Peptide chain release factor 2 (373 aa).

An N5-methylglutamine modification is found at Gln251.

This sequence belongs to the prokaryotic/mitochondrial release factor family. Post-translationally, methylated by PrmC. Methylation increases the termination efficiency of RF2.

The protein resides in the cytoplasm. In terms of biological role, peptide chain release factor 2 directs the termination of translation in response to the peptide chain termination codons UGA and UAA. This chain is Peptide chain release factor 2, found in Salinispora tropica (strain ATCC BAA-916 / DSM 44818 / JCM 13857 / NBRC 105044 / CNB-440).